A 209-amino-acid chain; its full sequence is Small ribosomal subunit protein uS5 (209 aa).

Polar residues predominate over residues 1 to 11 (MTQPNTQTTPN). Residues 1–55 (MTQPNTQTTPNDVPAAAEGQQEQQQQQRRGGGRERRGGGRRGDRRGQERDSEWQE) form a disordered region. Residues 18-28 (EGQQEQQQQQR) show a composition bias toward low complexity. Residues 31 to 55 (GGRERRGGGRRGDRRGQERDSEWQE) are compositionally biased toward basic and acidic residues. The 64-residue stretch at 53–116 (WQERVVQIRR…ADGKKHLVKV (64 aa)) folds into the S5 DRBM domain.

This sequence belongs to the universal ribosomal protein uS5 family. Part of the 30S ribosomal subunit. Contacts proteins S4 and S8.

Its function is as follows. With S4 and S12 plays an important role in translational accuracy. Located at the back of the 30S subunit body where it stabilizes the conformation of the head with respect to the body. The protein is Small ribosomal subunit protein uS5 of Prochlorococcus marinus (strain MIT 9313).